The sequence spans 280 residues: Ribosomal protein L11 methyltransferase (280 aa).

S-adenosyl-L-methionine is bound by residues Thr-130, Gly-151, Asp-172, and Asn-213.

Belongs to the methyltransferase superfamily. PrmA family.

The protein localises to the cytoplasm. It carries out the reaction L-lysyl-[protein] + 3 S-adenosyl-L-methionine = N(6),N(6),N(6)-trimethyl-L-lysyl-[protein] + 3 S-adenosyl-L-homocysteine + 3 H(+). In terms of biological role, methylates ribosomal protein L11. The chain is Ribosomal protein L11 methyltransferase from Nitratiruptor sp. (strain SB155-2).